Reading from the N-terminus, the 479-residue chain is 3-phytase B (479 aa).

The N-terminal stretch at 1–19 (MPRTSLLTLACALATGASA) is a signal peptide. 5 cysteine pairs are disulfide-bonded: Cys71-Cys387, Cys128-Cys472, Cys216-Cys441, Cys225-Cys298, and Cys413-Cys421. His82 acts as the Nucleophile in catalysis. Residue Asn191 is glycosylated (N-linked (GlcNAc...) asparagine). Asn315 is a glycosylation site (N-linked (GlcNAc...) asparagine). The active-site Proton donor is the Asp338. The N-linked (GlcNAc...) asparagine glycan is linked to Asn458.

Belongs to the histidine acid phosphatase family. As to quaternary structure, homodimer.

It catalyses the reaction 1D-myo-inositol hexakisphosphate + H2O = 1D-myo-inositol 1,2,4,5,6-pentakisphosphate + phosphate. Functionally, catalyzes the hydrolysis of inorganic orthophosphate from phytate. This Aspergillus awamori (Black koji mold) protein is 3-phytase B (phyB).